Reading from the N-terminus, the 78-residue chain is MAFRENVLEILEEITETEEVVQNTNIKLFDEGLLDSMATVQLLIEIEEKLDITVPVSEFDRDEWATPEMIITQLEALK.

The 78-residue stretch at 1 to 78 folds into the Carrier domain; sequence MAFRENVLEI…MIITQLEALK (78 aa). The residue at position 36 (S36) is an O-(pantetheine 4'-phosphoryl)serine.

It belongs to the DltC family. Post-translationally, 4'-phosphopantetheine is transferred from CoA to a specific serine of apo-DCP.

The protein resides in the cytoplasm. Its pathway is cell wall biogenesis; lipoteichoic acid biosynthesis. Carrier protein involved in the D-alanylation of lipoteichoic acid (LTA). The loading of thioester-linked D-alanine onto DltC is catalyzed by D-alanine--D-alanyl carrier protein ligase DltA. The DltC-carried D-alanyl group is further transferred to cell membrane phosphatidylglycerol (PG) by forming an ester bond, probably catalyzed by DltD. D-alanylation of LTA plays an important role in modulating the properties of the cell wall in Gram-positive bacteria, influencing the net charge of the cell wall. The polypeptide is D-alanyl carrier protein (Listeria welshimeri serovar 6b (strain ATCC 35897 / DSM 20650 / CCUG 15529 / CIP 8149 / NCTC 11857 / SLCC 5334 / V8)).